A 329-amino-acid chain; its full sequence is PTS-dependent dihydroxyacetone kinase 1, dihydroxyacetone-binding subunit DhaK (329 aa).

Residues 7–329 enclose the DhaK domain; sequence GTDQVVEQMV…LKLPVDTIAW (323 aa). Residues 53–56, Lys-104, and Asp-109 contribute to the dihydroxyacetone site; that span reads GSGH. His-56 serves as the catalytic Proton acceptor. The Tele-hemiaminal-histidine intermediate role is filled by His-218.

In terms of assembly, homodimer. The dihydroxyacetone kinase complex is composed of a homodimer of DhaM, a homodimer of DhaK and the subunit DhaL.

Its subcellular location is the cytoplasm. The enzyme catalyses dihydroxyacetone + phosphoenolpyruvate = dihydroxyacetone phosphate + pyruvate. Its pathway is polyol metabolism; glycerol degradation. Dihydroxyacetone binding subunit of the dihydroxyacetone kinase, which is responsible for the phosphoenolpyruvate (PEP)-dependent phosphorylation of dihydroxyacetone via a phosphoryl group transfer from DhaL-ATP. This Listeria innocua serovar 6a (strain ATCC BAA-680 / CLIP 11262) protein is PTS-dependent dihydroxyacetone kinase 1, dihydroxyacetone-binding subunit DhaK.